The sequence spans 78 residues: Large ribosomal subunit protein bL28 (78 aa).

Polar residues predominate over residues 1–20 (MSRVCQLTGTRANNGMSVSH). Positions 1 to 23 (MSRVCQLTGTRANNGMSVSHSHI) are disordered.

The protein belongs to the bacterial ribosomal protein bL28 family.

The polypeptide is Large ribosomal subunit protein bL28 (Prochlorococcus marinus (strain NATL2A)).